The following is a 279-amino-acid chain: Protein BASIC PENTACYSTEINE2 (279 aa).

The tract at residues 126–167 (TKKRKTNAKAGSTPKAKKPRKPKDENSNNNNNNNTNVTRVKP) is disordered. The span at 152-161 (SNNNNNNNTN) shows a compositional bias: low complexity.

It belongs to the BBR/BPC family. Expressed in seedlings, leaves and pistils. Detected in the base of flowers and tips of carpels, in sepal and petal vasculature, in pollen grains, in young rosette, in the lateral and tip of primary roots, and in ovule at the exception of the outer integument.

It localises to the nucleus. In terms of biological role, transcriptional regulator that specifically binds to GA-rich elements (GAGA-repeats) present in regulatory sequences of genes involved in developmental processes. This is Protein BASIC PENTACYSTEINE2 from Arabidopsis thaliana (Mouse-ear cress).